We begin with the raw amino-acid sequence, 212 residues long: Adenylate kinase (212 aa).

10-15 provides a ligand contact to ATP; sequence GAGKGT. The segment at 30–59 is NMP; the sequence is AIGDIFRTIIKTSTSEAELINNYVRQGELI. AMP contacts are provided by residues Arg-36, 57–59, 85–88, and Gln-92; these read ELI and GYPR. Residues 122-160 form an LID region; it reads GRYSCKNCGKIYNRYFLQPKTDNVCDVCGSSTFDYRKDD. Residue Arg-123 coordinates ATP. Zn(2+) is bound by residues Cys-126 and Cys-129. 132 to 133 contributes to the ATP binding site; sequence IY. Positions 146 and 149 each coordinate Zn(2+). AMP is bound by residues Arg-157 and Arg-168. Lys-196 serves as a coordination point for ATP.

This sequence belongs to the adenylate kinase family. In terms of assembly, monomer.

The protein localises to the cytoplasm. It carries out the reaction AMP + ATP = 2 ADP. Its pathway is purine metabolism; AMP biosynthesis via salvage pathway; AMP from ADP: step 1/1. Functionally, catalyzes the reversible transfer of the terminal phosphate group between ATP and AMP. Plays an important role in cellular energy homeostasis and in adenine nucleotide metabolism. This Rickettsia rickettsii (strain Iowa) protein is Adenylate kinase.